Here is a 200-residue protein sequence, read N- to C-terminus: Elongation factor Ts (200 aa).

The segment at 81–84 is involved in Mg(2+) ion dislocation from EF-Tu; it reads TDFV.

The protein belongs to the EF-Ts family.

The protein localises to the cytoplasm. In terms of biological role, associates with the EF-Tu.GDP complex and induces the exchange of GDP to GTP. It remains bound to the aminoacyl-tRNA.EF-Tu.GTP complex up to the GTP hydrolysis stage on the ribosome. The protein is Elongation factor Ts of Nitratidesulfovibrio vulgaris (strain DSM 19637 / Miyazaki F) (Desulfovibrio vulgaris).